The following is a 393-amino-acid chain: 1-deoxy-D-xylulose 5-phosphate reductoisomerase (393 aa).

NADPH is bound by residues T10, G11, S12, I13, R37, Q38, and N124. Residue K125 coordinates 1-deoxy-D-xylulose 5-phosphate. E126 contributes to the NADPH binding site. A Mn(2+)-binding site is contributed by D150. 1-deoxy-D-xylulose 5-phosphate is bound by residues S151, E152, S179, and H202. E152 serves as a coordination point for Mn(2+). G208 is an NADPH binding site. 1-deoxy-D-xylulose 5-phosphate-binding residues include S215, N220, K221, and E224. E224 contacts Mn(2+).

It belongs to the DXR family. The cofactor is Mg(2+). Requires Mn(2+) as cofactor.

The catalysed reaction is 2-C-methyl-D-erythritol 4-phosphate + NADP(+) = 1-deoxy-D-xylulose 5-phosphate + NADPH + H(+). It functions in the pathway isoprenoid biosynthesis; isopentenyl diphosphate biosynthesis via DXP pathway; isopentenyl diphosphate from 1-deoxy-D-xylulose 5-phosphate: step 1/6. Catalyzes the NADPH-dependent rearrangement and reduction of 1-deoxy-D-xylulose-5-phosphate (DXP) to 2-C-methyl-D-erythritol 4-phosphate (MEP). This is 1-deoxy-D-xylulose 5-phosphate reductoisomerase from Cupriavidus taiwanensis (strain DSM 17343 / BCRC 17206 / CCUG 44338 / CIP 107171 / LMG 19424 / R1) (Ralstonia taiwanensis (strain LMG 19424)).